Here is a 505-residue protein sequence, read N- to C-terminus: MGETLGDSPVDPEHGAFADALPMSTSQEITMVDTEMPFWPTNFGISSVDLSVMEDHSHSFDIKPFTTVDFSSISAPHYEDIPFTRADPMVADYKYDLKLQEYQSAIKVEPASPPYYSEKTQLYNRPHEEPSNSLMAIECRVCGDKASGFHYGVHACEGCKGFFRRTIRLKLIYDRCDLNCRIHKKSRNKCQYCRFQKCLAVGMSHNAIRFGRMPQAEKEKLLAEISSDIDQLNPESADLRALAKHLYDSYIKSFPLTKAKARAILTGKTTDKSPFVIYDMNSLMMGEDKIKFKHITPLQEQSKEVAIRIFQGCQFRSVEAVQEITEYAKNIPGFINLDLNDQVTLLKYGVHEIIYTMLASLMNKDGVLISEGQGFMTREFLKNLRKPFGDFMEPKFEFAVKFNALELDDSDLAIFIAVIILSGDRPGLLNVKPIEDIQDNLLQALELQLKLNHPESSQLFAKVLQKMTDLRQIVTEHVQLLHVIKKTETDMSLHPLLQEIYKDLY.

O-linked (GlcNAc) threonine glycosylation is present at T84. Residue S112 is modified to Phosphoserine; by MAPK. A DNA-binding region (nuclear receptor) is located at residues 136–210 (AIECRVCGDK…VGMSHNAIRF (75 aa)). NR C4-type zinc fingers lie at residues 139–159 (CRVC…CEGC) and 176–198 (CDLN…FQKC). The segment at 205 to 280 (HNAIRFGRMP…DKSPFVIYDM (76 aa)) is interaction with FAM120B. One can recognise an NR LBD domain in the interval 238–503 (DLRALAKHLY…HPLLQEIYKD (266 aa)). K252 participates in a covalent cross-link: Glycyl lysine isopeptide (Lys-Gly) (interchain with G-Cter in ubiquitin). Residues 495-503 (PLLQEIYKD) carry the 9aaTAD motif.

The protein belongs to the nuclear hormone receptor family. NR1 subfamily. In terms of assembly, heterodimer with other nuclear receptors, such as RXRA. The heterodimer with the retinoic acid receptor RXRA is called adipocyte-specific transcription factor ARF6. Interacts with NCOA6 coactivator, leading to a strong increase in transcription of target genes. Interacts with coactivator PPARBP, leading to a mild increase in transcription of target genes. Interacts with NOCA7 in a ligand-inducible manner. Interacts with NCOA1 and NCOA2 LXXLL motifs. Interacts with ASXL1, ASXL2, DNTTIP2, FAM120B, MAP2K1/MEK1, NR0B2, PDPK1, PRDM16, PRMT2 and TGFB1I1. Interacts (when activated by agonist) with PPP5C. Interacts with HELZ2 and THRAP3; the interaction stimulates the transcriptional activity of PPARG. Interacts with PER2, the interaction is ligand dependent and blocks PPARG recruitment to target promoters. Interacts with NOCT. Interacts with FOXO1 (acetylated form). Interacts with ACTN4. Interacts (when in the liganded conformation) with GPS2. Interacts with CRY1 and CRY2 in a ligand-dependent manner. In the absence of hormonal ligand, interacts with TACC1. In macrophages, interacts with PAQR3 and STUB1; the interactions promote PPARG poylubiquitination and STUB1-mediated degradation. In terms of processing, O-GlcNAcylation at Thr-84 reduces transcriptional activity in adipocytes. Post-translationally, phosphorylated in basal conditions and dephosphorylated when treated with the ligand. May be dephosphorylated by PPP5C. The phosphorylated Ser-112 form is recognized by PER2 and repressed, dephosphorylation at Ser-112 induces adipogenic activity. Ser-112 phosphorylation levels are reduced by 65% in brown adipose tissue compared to white adipose tissue. Ubiquitinated by E3 ubiquitin-protein ligase complex containing FBXO9; leading to proteasomal degradation. In terms of processing, ubiquitinated by E3 ubiquitin-protein ligase complex containing FBXO9; leading to proteasomal degradation. Ubiquitinated at Lys-252 by TRIM55 leading to proteasomal degradation. Ubiquitinated by E3 ubiquitin-protein ligase STUB1/CHIP; leading to proteasomal degradation. Highest expression in white and brown adipose tissue. Also found in liver, skeletal muscle, heart, adrenal gland, spleen, kidney and intestine. Isoform 2 is more abundant than isoform 1 in adipose tissue.

Its subcellular location is the nucleus. The protein localises to the cytoplasm. With respect to regulation, PDPK1 activates its transcriptional activity independently of its kinase activity. Its function is as follows. Nuclear receptor that binds peroxisome proliferators such as hypolipidemic drugs and fatty acids. Once activated by a ligand, the nuclear receptor binds to DNA specific PPAR response elements (PPRE) and modulates the transcription of its target genes, such as acyl-CoA oxidase. It therefore controls the peroxisomal beta-oxidation pathway of fatty acids. Key regulator of adipocyte differentiation and glucose homeostasis. ARF6 acts as a key regulator of the tissue-specific adipocyte P2 (aP2) enhancer. Acts as a critical regulator of gut homeostasis by suppressing NF-kappa-B-mediated pro-inflammatory responses. Plays a role in the regulation of cardiovascular circadian rhythms by regulating the transcription of BMAL1 in the blood vessels. The sequence is that of Peroxisome proliferator-activated receptor gamma (Pparg) from Mus musculus (Mouse).